A 384-amino-acid polypeptide reads, in one-letter code: Chaperone protein DnaJ (384 aa).

The J domain maps to 5 to 70 (DYYEVLGVAR…QKKAAYDRFG (66 aa)). A CR-type zinc finger spans residues 138–216 (GAQKTINVPG…CRGAGRVQKE (79 aa)). The Zn(2+) site is built by Cys-151, Cys-154, Cys-168, Cys-171, Cys-190, Cys-193, Cys-204, and Cys-207. 4 CXXCXGXG motif repeats span residues 151 to 158 (CAACNGTG), 168 to 175 (CPTCSGMG), 190 to 197 (CPTCSGHG), and 204 to 211 (CQECRGAG). Residues 300–322 (KVPPGTQSGKQLRLRGKGMPPLR) form a disordered region.

Belongs to the DnaJ family. Homodimer. Zn(2+) serves as cofactor.

The protein localises to the cytoplasm. Participates actively in the response to hyperosmotic and heat shock by preventing the aggregation of stress-denatured proteins and by disaggregating proteins, also in an autonomous, DnaK-independent fashion. Unfolded proteins bind initially to DnaJ; upon interaction with the DnaJ-bound protein, DnaK hydrolyzes its bound ATP, resulting in the formation of a stable complex. GrpE releases ADP from DnaK; ATP binding to DnaK triggers the release of the substrate protein, thus completing the reaction cycle. Several rounds of ATP-dependent interactions between DnaJ, DnaK and GrpE are required for fully efficient folding. Also involved, together with DnaK and GrpE, in the DNA replication of plasmids through activation of initiation proteins. This chain is Chaperone protein DnaJ, found in Paracoccus denitrificans (strain Pd 1222).